The sequence spans 962 residues: Integrator complex subunit 7 (962 aa).

Serine 338 and serine 809 each carry phosphoserine.

This sequence belongs to the Integrator subunit 7 family. As to quaternary structure, component of the Integrator complex, composed of core subunits INTS1, INTS2, INTS3, INTS4, INTS5, INTS6, INTS7, INTS8, INTS9/RC74, INTS10, INTS11/CPSF3L, INTS12, INTS13, INTS14 and INTS15. The core complex associates with protein phosphatase 2A subunits PPP2CA and PPP2R1A, to form the Integrator-PP2A (INTAC) complex. Interacts with NABP2.

The protein resides in the nucleus. It is found in the chromosome. It localises to the cytoplasm. Its function is as follows. Component of the integrator complex, a multiprotein complex that terminates RNA polymerase II (Pol II) transcription in the promoter-proximal region of genes. The integrator complex provides a quality checkpoint during transcription elongation by driving premature transcription termination of transcripts that are unfavorably configured for transcriptional elongation: the complex terminates transcription by (1) catalyzing dephosphorylation of the C-terminal domain (CTD) of Pol II subunit POLR2A/RPB1 and SUPT5H/SPT5, (2) degrading the exiting nascent RNA transcript via endonuclease activity and (3) promoting the release of Pol II from bound DNA. The integrator complex is also involved in terminating the synthesis of non-coding Pol II transcripts, such as enhancer RNAs (eRNAs), small nuclear RNAs (snRNAs), telomerase RNAs and long non-coding RNAs (lncRNAs). May be not involved in the recruitment of cytoplasmic dynein to the nuclear envelope by different components of the INT complex. Plays a role in DNA damage response (DDR) signaling during the S phase. This is Integrator complex subunit 7 from Homo sapiens (Human).